The chain runs to 607 residues: Glucose-6-phosphate isomerase, glycosomal (607 aa).

Glutamate 411 functions as the Proton donor in the catalytic mechanism. Residues histidine 442 and lysine 571 contribute to the active site. The short motif at 605-607 (SHL) is the Microbody targeting signal element.

The protein belongs to the GPI family. In terms of assembly, homodimer.

Its subcellular location is the glycosome. The enzyme catalyses alpha-D-glucose 6-phosphate = beta-D-fructose 6-phosphate. It functions in the pathway carbohydrate degradation; glycolysis; D-glyceraldehyde 3-phosphate and glycerone phosphate from D-glucose: step 2/4. This chain is Glucose-6-phosphate isomerase, glycosomal (PGI), found in Trypanosoma brucei brucei.